The primary structure comprises 226 residues: Choline transport system permease protein OpuBD (226 aa).

The ABC transmembrane type-1 domain occupies 22-202 (FGRHFLMSAY…VMAVGADLLM (181 aa)). The next 5 helical transmembrane spans lie at 27-47 (LMSA…GILI), 52-72 (RLSA…ALAM), 73-93 (LAVL…SLFL), 148-168 (ALVI…GGLG), and 182-202 (AIIL…DLLM).

The protein belongs to the binding-protein-dependent transport system permease family. CysTW subfamily.

The protein resides in the cell membrane. In terms of biological role, involved in a high affinity multicomponent binding-protein-dependent transport system for choline; probably responsible for the translocation of the substrate across the membrane. The sequence is that of Choline transport system permease protein OpuBD (opuBD) from Bacillus subtilis (strain 168).